Consider the following 332-residue polypeptide: Phosphate acyltransferase (332 aa).

It belongs to the PlsX family. In terms of assembly, homodimer. Probably interacts with PlsY.

Its subcellular location is the cytoplasm. The catalysed reaction is a fatty acyl-[ACP] + phosphate = an acyl phosphate + holo-[ACP]. It participates in lipid metabolism; phospholipid metabolism. Catalyzes the reversible formation of acyl-phosphate (acyl-PO(4)) from acyl-[acyl-carrier-protein] (acyl-ACP). This enzyme utilizes acyl-ACP as fatty acyl donor, but not acyl-CoA. This is Phosphate acyltransferase from Caldanaerobacter subterraneus subsp. tengcongensis (strain DSM 15242 / JCM 11007 / NBRC 100824 / MB4) (Thermoanaerobacter tengcongensis).